The sequence spans 370 residues: Probable protein phosphatase 2C 67 (370 aa).

A PPM-type phosphatase domain is found at 35-344; it reads TFGEFSMAMI…DDITVIVVYL (310 aa). Residues Asp-77, Gly-78, Asp-276, and Asp-335 each coordinate Mn(2+).

This sequence belongs to the PP2C family. As to quaternary structure, interacts with SAUR19. Interacts with AHA2 at the plasma membrane. Mg(2+) is required as a cofactor. The cofactor is Mn(2+).

Its subcellular location is the cell membrane. It carries out the reaction O-phospho-L-seryl-[protein] + H2O = L-seryl-[protein] + phosphate. It catalyses the reaction O-phospho-L-threonyl-[protein] + H2O = L-threonyl-[protein] + phosphate. Functionally, dephosphorylates and represses plasma membrane H(+)-ATPases (PM H(+)-ATPases, e.g. AHA1 and AHA2), thus influencing negatively plant growth and fitness. Promotes the apical hook maintenance of etiolated seedlings. This is Probable protein phosphatase 2C 67 from Arabidopsis thaliana (Mouse-ear cress).